The chain runs to 717 residues: DNA polymerase iota (717 aa).

The tract at residues 1–22 is disordered; the sequence is MEPLHAGAAGSSRAVCSQGPPT. Residues 30–243 form the UmuC domain; sequence IVHVDLDCFY…NHIKEIPGIG (214 aa). Asp-34 and Leu-35 together coordinate Mg(2+). A 2'-deoxyribonucleoside 5'-triphosphate is bound by residues Tyr-39 and Arg-71. Asp-126 is a Mg(2+) binding site. Glu-127 acts as the Proton acceptor in catalysis. DNA-binding stretches follow at residues 300–307 and 343–360; these read QSFSEEDT and RLVI…ESRQ. Positions 500–517 match the Ubiquitin-binding 1 (UBM1) motif; that stretch reads VDQEVFKQLPADIQEEIL. 3 disordered regions span residues 549-589, 603-622, and 644-687; these read QMQA…SHPS, KDEQ…FSST, and HRTV…DIDP. A compositionally biased stretch (low complexity) spans 575 to 589; that stretch reads PGTSGLSPGSTSHPS. 2 stretches are compositionally biased toward polar residues: residues 607–622 and 652–662; these read TSQG…FSST and QTATASHQGLE. A compositionally biased stretch (basic and acidic residues) spans 665–679; the sequence is QGLESRELDSAEEKL. The Ubiquitin-binding 2 (UBM2) motif lies at 685-702; it reads IDPQVFYELPEEVQKELM.

The protein belongs to the DNA polymerase type-Y family. As to quaternary structure, interacts with POLH. Interacts with REV1. Interacts with ubiquitin. Mg(2+) serves as cofactor. Mn(2+) is required as a cofactor. Post-translationally, monoubiquitinated. Protein monoubiquitination prevents POLI binding to ubiquitin via the ubiquitin-binding motif 1 and ubiquitin-binding motif 2. As to expression, detected in testis, and at very low levels in spleen, lung and brain. Detected in round spermatids, but not in prophase spermatocytes.

The protein resides in the nucleus. It carries out the reaction DNA(n) + a 2'-deoxyribonucleoside 5'-triphosphate = DNA(n+1) + diphosphate. Error-prone DNA polymerase specifically involved in DNA repair. Plays an important role in translesion synthesis, where the normal high-fidelity DNA polymerases cannot proceed and DNA synthesis stalls. Favors Hoogsteen base-pairing in the active site. Inserts the correct base with high-fidelity opposite an adenosine template. Exhibits low fidelity and efficiency opposite a thymidine template, where it will preferentially insert guanosine. May play a role in hypermutation of immunoglobulin genes. Forms a Schiff base with 5'-deoxyribose phosphate at abasic sites, but may not have lyase activity. The protein is DNA polymerase iota (Poli) of Mus musculus (Mouse).